Here is a 504-residue protein sequence, read N- to C-terminus: Maturase K (504 aa).

Belongs to the intron maturase 2 family. MatK subfamily.

It is found in the plastid. It localises to the chloroplast. Its function is as follows. Usually encoded in the trnK tRNA gene intron. Probably assists in splicing its own and other chloroplast group II introns. The chain is Maturase K from Thlaspi arvense (Field penny-cress).